A 305-amino-acid polypeptide reads, in one-letter code: Tetraspanin-12 (305 aa).

Over 1–12 (MAREDSVKCLRC) the chain is Cytoplasmic. S-palmitoyl cysteine attachment occurs at residues C9 and C12. A helical membrane pass occupies residues 13–33 (LLYALNLLFWLMSISVLAVSA). The Extracellular portion of the chain corresponds to 34 to 59 (WMRDYLNNVLTLTAETRVEEAVILTY). A helical transmembrane segment spans residues 60–80 (FPVVHPVMIAVCCFLIIVGML). The Cytoplasmic segment spans residues 81 to 89 (GYCGTVKRN). C83 carries the S-palmitoyl cysteine lipid modification. Residues 90 to 110 (LLLLAWYFGTLLVIFCVELAC) form a helical membrane-spanning segment. Residues 111–224 (GVWTYEQEVM…RGTKQLQVLR (114 aa)) are Extracellular-facing. The helical transmembrane segment at 225-245 (FLGISIGVTQILAMILTITLL) threads the bilayer. Residues 246-305 (WALYYDRREPGTDQMLSLKNDTSQHLSCHSVELLKPSLSRIFEHTSMANSFNTHFEMEEL) lie on the Cytoplasmic side of the membrane.

The protein belongs to the tetraspanin (TM4SF) family. As to quaternary structure, interacts (when palmitoylated) with ADAM10. Interacts with MMP14/MT1-MMP. Component of a complex, at least composed of TSPAN12, FZD4 and norrin (NDP). Palmitoylated; required for interaction with ADAM10. As to expression, expressed in the neonatal retinal vasculature but not other retinal tissues. Also detected in the neonatal meningeal vasculature and in nonvascular cell types, such as the smooth muscle cells in the neonatal intestine.

Its subcellular location is the cell membrane. Regulator of cell surface receptor signal transduction. Acts as a regulator of membrane proteinases such as ADAM10 and MMP14/MT1-MMP. Activates ADAM10-dependent cleavage activity of amyloid precursor protein (APP). Activates MMP14/MT1-MMP-dependent cleavage activity. Plays a central role in retinal vascularization by regulating norrin (NDP) signal transduction. Acts in concert with norrin (NDP) to promote FZD4 multimerization and subsequent activation of FZD4, leading to promote accumulation of beta-catenin (CTNNB1) and stimulate LEF/TCF-mediated transcriptional programs. Suprisingly, it only activate the norrin (NDP)-dependent activation of FZD4, while it does not activate the Wnt-dependent activation of FZD4, suggesting the existence of a Wnt-independent signaling that also promote accumulation the beta-catenin (CTNNB1). The polypeptide is Tetraspanin-12 (Tspan12) (Mus musculus (Mouse)).